A 223-amino-acid polypeptide reads, in one-letter code: Noggin (223 aa).

Positions 1-26 are cleaved as a signal peptide; it reads MDHSQCLVTIYAAAVLLGLRLQQGSC. N-linked (GlcNAc...) asparagine glycosylation is present at Asn61. 4 cysteine pairs are disulfide-bonded: Cys146-Cys183, Cys169-Cys219, Cys175-Cys221, and Cys198-Cys206.

It belongs to the noggin family. In terms of assembly, homodimer.

The protein localises to the secreted. Its function is as follows. Inhibitor of bone morphogenetic proteins (BMP) signaling. Controls somitogenesis by sequestering the BMP-4 activity which in turn differentiates distinct subtypes of the mesoderm along the mediolateral axis. This chain is Noggin (NOG), found in Gallus gallus (Chicken).